Reading from the N-terminus, the 55-residue chain is DSPAWLKSMERIFQSEERECRWMFGGCTTDSDCCEHLGCRWEKPSWCAWDGTVRK.

Residues 1 to 19 (DSPAWLKSMERIFQSEERE) constitute a propeptide that is removed on maturation. Cystine bridges form between Cys-20–Cys-34, Cys-27–Cys-39, and Cys-33–Cys-47.

This sequence belongs to the neurotoxin 10 (Hwtx-1) family. 06 (F4b) subfamily. As to expression, expressed by the venom gland.

The protein resides in the secreted. Functionally, probable ion channel inhibitor. This chain is U2-theraphotoxin-Cg1a, found in Chilobrachys guangxiensis (Chinese earth tiger tarantula).